The sequence spans 242 residues: Myb-related protein MYBAS2 (242 aa).

HTH myb-type domains are found at residues 5 to 61 (REEI…HPGL) and 62 to 112 (KRGR…RKKA). The segment at residues 33 to 57 (WDFIAKVSGLNRTGKSCRLRWVNYL) is a DNA-binding region (H-T-H motif). The short motif at 62-65 (KRGR) is the Bipartite nuclear localization signal 1 element. A DNA-binding region (H-T-H motif) is located at residues 85–108 (WSRIARRLPGRTDNEIKNYWRTHM). The Bipartite nuclear localization signal 2 motif lies at 109–117 (RKKAQERKS). The tract at residues 110 to 133 (KKAQERKSNMSPSSSSSSLTYQSC) is disordered. The span at 118–133 (NMSPSSSSSSLTYQSC) shows a compositional bias: low complexity.

It is found in the nucleus. Functionally, transcription factor. The polypeptide is Myb-related protein MYBAS2 (MYBAS2) (Oryza sativa subsp. japonica (Rice)).